The chain runs to 388 residues: Beta-1,4-galactosyltransferase 5 (388 aa).

Topologically, residues 1-14 are cytoplasmic; it reads MRVRRGLLRLPRRS. Residues 15 to 35 form a helical; Signal-anchor for type II membrane protein membrane-spanning segment; that stretch reads LLAALFFFSLSSSLLYFVYVA. At 36-388 the chain is on the lumenal side; sequence PGIVNTYLFM…TPELAQVTEY (353 aa). Residues Asn77, Asn81, Asn90, Asn111, and Asn128 are each glycosylated (N-linked (GlcNAc...) asparagine). A disulfide bond links Cys114 and Cys158. UDP-alpha-D-galactose contacts are provided by residues 169 to 173, 208 to 210, 235 to 236, Tyr264, and Trp296; these read PFRNR, FNR, and VD. An intrachain disulfide couples Cys229 to Cys248. Asp236 is a binding site for Mn(2+). N-acetyl-D-glucosamine is bound at residue 298 to 301; that stretch reads GEDD. 329–330 is a UDP-alpha-D-galactose binding site; sequence YH. Arg340 lines the N-acetyl-D-glucosamine pocket. N-linked (GlcNAc...) asparagine glycans are attached at residues Asn364 and Asn373.

It belongs to the glycosyltransferase 7 family. As to quaternary structure, (Microbial infection) Interacts with porcine reproductive and respiratory syndrome virus GP5. Requires Mn(2+) as cofactor.

The protein resides in the golgi apparatus. Its subcellular location is the golgi stack membrane. The enzyme catalyses a beta-D-glucosyl-(1&lt;-&gt;1')-N-acylsphing-4-enine + UDP-alpha-D-galactose = a beta-D-Gal-(1-&gt;4)-beta-D-Glc-(1&lt;-&gt;1)-Cer(d18:1(4E)) + UDP + H(+). It participates in protein modification; protein glycosylation. The protein operates within sphingolipid metabolism. Functionally, catalyzes the synthesis of lactosylceramide (LacCer) via the transfer of galactose from UDP-galactose to glucosylceramide (GlcCer). LacCer is the starting point in the biosynthesis of all gangliosides (membrane-bound glycosphingolipids) which play pivotal roles in the CNS including neuronal maturation and axonal and myelin formation. Plays a role in the glycosylation of BMPR1A and regulation of its protein stability. Essential for extraembryonic development during early embryogenesis. (Microbial infection) May play a role in the glycosylation of porcine reproductive and respiratory syndrome virus GP5 protein and may be involved in the regulation of viral proliferation. The protein is Beta-1,4-galactosyltransferase 5 (B4GALT5) of Sus scrofa (Pig).